The chain runs to 587 residues: L-ornithine N(5)-monooxygenase (587 aa).

Residues 53 to 61 (EKHTSFQWH) and glutamine 72 each bind FAD. Lysine 77 contributes to the substrate binding site. 235 to 238 (GGQS) provides a ligand contact to NADP(+). Substrate is bound by residues 282–285 (NEVF) and asparagine 312. Residue 312-314 (NYS) participates in NADP(+) binding. Positions 488–511 (DNSAASGVSGASTPLTSPSEEEGK) are disordered. Residues 491–505 (AASGVSGASTPLTSP) are compositionally biased toward polar residues. 567–569 (TLL) contributes to the FAD binding site. Residue serine 570 participates in substrate binding.

This sequence belongs to the lysine N(6)-hydroxylase/L-ornithine N(5)-oxygenase family. In terms of assembly, homotetramer. It depends on FAD as a cofactor.

It catalyses the reaction L-ornithine + NADPH + O2 = N(5)-hydroxy-L-ornithine + NADP(+) + H2O. The enzyme catalyses L-ornithine + NADH + O2 = N(5)-hydroxy-L-ornithine + NAD(+) + H2O. The protein operates within siderophore biosynthesis; ferrichrome biosynthesis. L-ornithine N(5)-monooxygenase; part of the siderophore biosynthetic pathway. Omphalotus olearius produces ferrichrome A, but no other siderophore has been detected. Ferrichrome A consists of a hexapeptide ring made up of one glycine, two serine, and three N(5)-hydroxyornithine amino acid residues, the latter acylated by trans-(alpha-methyl)-glutaconic acid residues. The biosynthesis of ferrichrome A depends on the hydroxylation of ornithine to N(5)-hydroxyornithine, catalyzed by the monooxygenase omo1. The second step, the acylation of N(5)-hydroxy-L-ornithine is probably catalyzed by the N-acyltransferase ato1. Finally, assembly of ferrichrome A is catalyzed by the nonribosomal peptide synthase (NRPS) fso1. This Omphalotus olearius (Jack o'lantern) protein is L-ornithine N(5)-monooxygenase.